The primary structure comprises 345 residues: Type II restriction enzyme HgiCI (345 aa).

The catalysed reaction is Endonucleolytic cleavage of DNA to give specific double-stranded fragments with terminal 5'-phosphates.. A P subtype restriction enzyme that recognizes the double-stranded sequence 5'-GGYRCC-3' and cleaves after G-1. The chain is Type II restriction enzyme HgiCI (hgiCIR) from Herpetosiphon aurantiacus (Herpetosiphon giganteus).